Here is a 156-residue protein sequence, read N- to C-terminus: Tripartite terminase subunit 2 (156 aa).

Positions 1-37 (MYESENASEHHPELEDVFSENTGDSNPSMGSSDSTRS) are disordered. Positions 19–37 (SENTGDSNPSMGSSDSTRS) are enriched in polar residues.

This sequence belongs to the herpesviridae TRM2 protein family. Associates with TRM1 and TRM3 to form the tripartite terminase complex.

Its subcellular location is the host nucleus. Component of the molecular motor that translocates viral genomic DNA in empty capsid during DNA packaging. Forms a tripartite terminase complex together with TRM1 and TRM3 in the host cytoplasm. Once the complex reaches the host nucleus, it interacts with the capsid portal vertex. This portal forms a ring in which genomic DNA is translocated into the capsid. This is Tripartite terminase subunit 2 from Varicella-zoster virus (strain Dumas) (HHV-3).